Reading from the N-terminus, the 711-residue chain is Nucleolin (711 aa).

The interval 1–304 is disordered; the sequence is MVKLAKAGKN…KKQKVEGTEP (304 aa). N6-acetyllysine is present on residues K9, K15, and K16. Residues 24–43 show a composition bias toward acidic residues; that stretch reads VEEDSEDEEMSEDEEDDSSG. Phosphoserine occurs at positions 28, 34, 41, and 42. The span at 56 to 107 shows a compositional bias: low complexity; it reads AAATSAKKVVVSPTKKVAVATPAKKAAVTPGKKAAATPAKKTVTPAKAVATP. Residues 58-65 form repeat 1; the sequence is ATSAKKVV. The segment at 58–135 is 8 X 8 AA tandem repeats of X-T-P-X-K-K-X-X; the sequence is ATSAKKVVVS…GAAIPAKGAK (78 aa). S67 carries the post-translational modification Phosphoserine. 4 positions are modified to phosphothreonine: T69, T76, T84, and T92. A run of 3 repeats spans residues 75–82, 83–90, and 91–98. An N6-acetyllysine modification is found at K96. T99 is modified (phosphothreonine). The 5; truncated repeat unit spans residues 99–104; the sequence is TPAKAV. The residue at position 102 (K102) is an N6-acetyllysine. Copy 6 of the repeat occupies 105-112; the sequence is ATPGKKGA. T106 carries the phosphothreonine modification. K109 is modified (N6-acetyllysine). T113 carries the post-translational modification Phosphothreonine. Residue K116 is modified to N6-acetyllysine. Repeat copies occupy residues 120-127 and 128-135. Position 121 is a phosphothreonine (T121). Positions 122–137 are enriched in low complexity; sequence PGKKGAAIPAKGAKNG. K124 bears the N6-acetyllysine mark. 4 positions are modified to phosphoserine: S145, S153, S184, and S207. 2 stretches are compositionally biased toward acidic residues: residues 145–171 and 184–212; these read SDEE…DEIE and SEDE…EEAM. Phosphothreonine is present on T215. Acidic residues predominate over residues 235 to 273; the sequence is EDEDEEEDDEDEDDDDDEDDEDEDDDDEDEEEEEEEEEP. A compositionally biased stretch (basic and acidic residues) spans 274 to 301; it reads VKEAPGKRKKEMAKQKAAPEAKKQKVEG. K298 participates in a covalent cross-link: Glycyl lysine isopeptide (Lys-Gly) (interchain with G-Cter in SUMO1); alternate. K298 is covalently cross-linked (Glycyl lysine isopeptide (Lys-Gly) (interchain with G-Cter in SUMO2); alternate). Phosphothreonine is present on T302. 2 RRM domains span residues 308 to 384 and 394 to 467; these read FNLF…KPKG and RTLL…YTGE. K319 is modified (N6-acetyllysine). K325 participates in a covalent cross-link: Glycyl lysine isopeptide (Lys-Gly) (interchain with G-Cter in SUMO1); alternate. K325 is covalently cross-linked (Glycyl lysine isopeptide (Lys-Gly) (interchain with G-Cter in SUMO2); alternate). N6-acetyllysine is present on K349. Residue S357 is modified to Phosphoserine. The residue at position 368 (T368) is a Phosphothreonine. K371 participates in a covalent cross-link: Glycyl lysine isopeptide (Lys-Gly) (interchain with G-Cter in SUMO2). Residue K378 forms a Glycyl lysine isopeptide (Lys-Gly) (interchain with G-Cter in SUMO2); alternate linkage. K378 is modified (N6-acetyllysine; alternate). An N6-acetyllysine mark is found at K399 and K404. A Phosphothreonine modification is found at T406. Residues K428 and K445 each carry the N6-acetyllysine modification. A phosphoserine mark is found at S459 and S461. Residues K468 and K478 each carry the N6-acetyllysine modification. One can recognise an RRM 3 domain in the interval 487 to 561; the sequence is KTLVLSNLSY…RAIRLELQGP (75 aa). K514 is covalently cross-linked (Glycyl lysine isopeptide (Lys-Gly) (interchain with G-Cter in SUMO2); alternate). K514 is modified (N6-acetyllysine; alternate). Position 522 is an N6-acetyllysine (K522). A Phosphoserine modification is found at S564. The residue at position 573 (K573) is an N6-acetyllysine. Residues 573–648 enclose the RRM 4 domain; the sequence is KTLFVKGLSE…NKVTLDWAKP (76 aa). Residue K578 forms a Glycyl lysine isopeptide (Lys-Gly) (interchain with G-Cter in SUMO2); alternate linkage. K578 carries the post-translational modification N6-acetyllysine; alternate. S581 carries the phosphoserine modification. A Glycyl lysine isopeptide (Lys-Gly) (interchain with G-Cter in SUMO1); alternate cross-link involves residue K590. K590 participates in a covalent cross-link: Glycyl lysine isopeptide (Lys-Gly) (interchain with G-Cter in SUMO2); alternate. A phosphoserine mark is found at S592 and S620. A Glycyl lysine isopeptide (Lys-Gly) (interchain with G-Cter in SUMO2) cross-link involves residue K625. The interval 641 to 711 is disordered; sequence VTLDWAKPKG…KPQGKKTKFE (71 aa). The residue at position 647 (K647) is an N6-acetyllysine. The span at 651–697 shows a compositional bias: gly residues; sequence EGGFGGRGGGRGGFGGRGGGRGGRGGFGGRGRGGFGGRGGFRGGRGG. An asymmetric dimethylarginine mark is found at R657, R661, R667, R671, R674, R680, R682, R688, and R692. At R695 the chain carries Asymmetric dimethylarginine; alternate. R695 carries the post-translational modification Omega-N-methylarginine; alternate. Over residues 698 to 711 the composition is skewed to basic and acidic residues; it reads GGDHKPQGKKTKFE.

In terms of assembly, identified in a IGF2BP1-dependent mRNP granule complex containing untranslated mRNAs. Component of the SWAP complex that consists of NPM1, NCL/nucleolin, PARP1 and SWAP70. Component of a complex which is at least composed of HTATSF1/Tat-SF1, the P-TEFb complex components CDK9 and CCNT1, RNA polymerase II, SUPT5H, and NCL/nucleolin. Interacts with AICDA. Interacts with APTX. Interacts with C1QBP. Interacts with ERBB4. Interacts (via C-terminus) with FMR1 isoform 6 (via N-terminus). Interacts with GZF1; this interaction is important for nucleolar localization of GZF1. Interacts with NSUN2. Interacts with NVL. Interacts (via N-terminus domain) with SETX. Interacts (via RRM1 and C-terminal RRM4/Arg/Gly-rich domains) with TERT; the interaction is important for nucleolar localization of TERT. Interacts with WDR46. Interacts with ZFP36. Interacts with LRRC34. Interacts with RRP1B. Interacts with HNRNPU; this interaction occurs during mitosis. Interacts with RIOK1; RIOK1 recruits NCL to PRMT5 for symmetrically methylation. Interacts with ZBTB7B. Interacts with MDK; this interaction promotes NCL clustering and lateral movements of this complex into lipid rafts leading to MDK internalization. Interacts with HDGF. Interacts with ALKBH2. Interacts with IGFBP5; this interaction is necessary for IGFBP5 localization to the nucleus. In terms of processing, some glutamate residues are glycylated by TTLL8. This modification occurs exclusively on glutamate residues and results in a glycine chain on the gamma-carboxyl group. Post-translationally, symmetrically methylated by PRMT5.

It localises to the nucleus. The protein localises to the nucleolus. Its subcellular location is the cytoplasm. In terms of biological role, nucleolin is the major nucleolar protein of growing eukaryotic cells. It is found associated with intranucleolar chromatin and pre-ribosomal particles. It induces chromatin decondensation by binding to histone H1. It is thought to play a role in pre-rRNA transcription and ribosome assembly. May play a role in the process of transcriptional elongation. Binds RNA oligonucleotides with 5'-UUAGGG-3' repeats more tightly than the telomeric single-stranded DNA 5'-TTAGGG-3' repeats. The chain is Nucleolin (NCL) from Macaca fascicularis (Crab-eating macaque).